Reading from the N-terminus, the 3971-residue chain is Mycosubtilin synthase subunit A (3971 aa).

Positions 160–479 (EPEADELAFI…ELEDIDLGRV (320 aa)) are acyl-CoA ligase. The Carrier 1 domain occupies 578–653 (TPIHEIETAL…DLAAFLVENH (76 aa)). S613 is subject to O-(pantetheine 4'-phosphoryl)serine. Positions 669–1092 (SKDIAIIGMS…GTNAHVVLEE (424 aa)) constitute a Ketosynthase family 3 (KS3) domain. Active-site for beta-ketoacyl synthase activity residues include C843, H974, and H1014. The region spanning 1290–1365 (THIESFLKTV…SVVDYLAENV (76 aa)) is the Carrier 2 domain. The residue at position 1324 (S1324) is an O-(pantetheine 4'-phosphoryl)serine. Residues 1434-1456 (ESEISQDKTSLSPKSVTAKKNSA) are disordered. The span at 1440 to 1456 (DKTSLSPKSVTAKKNSA) shows a compositional bias: polar residues. The segment at 1529–1856 (IIAERSDGSR…SYFEQSQVPI (328 aa)) is GSA-AT. K1759 bears the N6-(pyridoxal phosphate)lysine mark. Residues 1921–1942 (GGFIPEGPDSPNDGGHKEPETY) are disordered. Residues 1938-2240 (EPETYELSPE…NMVPVKNTAS (303 aa)) form a condensation 1 region. The Carrier 3 domain maps to 2405–2480 (EPENETELQI…ELANFIRGEK (76 aa)). O-(pantetheine 4'-phosphoryl)serine is present on S2440. Residues 2492–2781 (QKAFYRTSPA…QTMGIRTKPQ (290 aa)) are condensation 2. A domain 1 (asparagine-activating) region spans residues 2937-3823 (PHNDTVCQWF…RNHPAGRKIF (887 aa)). Positions 2967–3364 (TYGQLNERVN…KVEAVQKAVV (398 aa)) are adenylation 1. Positions 3442–3517 (PPGNEVESKL…QLANMALRME (76 aa)) constitute a Carrier 4 domain. S3477 carries the post-translational modification O-(pantetheine 4'-phosphoryl)serine. The condensation 3 stretch occupies residues 3529-3818 (KISYYPVSSA…NTLVIRNHPA (290 aa)).

Belongs to the ATP-dependent AMP-binding enzyme family. Pyridoxal 5'-phosphate serves as cofactor. It depends on pantetheine 4'-phosphate as a cofactor.

This protein is a multifunctional enzyme, able to activate a long chain fatty acid and link it with the amino acid Asn as part of the synthesis of mycosubtilin. The activation sites consist of individual domains. This is Mycosubtilin synthase subunit A (mycA) from Bacillus subtilis.